A 487-amino-acid chain; its full sequence is Siroheme synthase (487 aa).

The precorrin-2 dehydrogenase /sirohydrochlorin ferrochelatase stretch occupies residues Met1–Leu203. Residues Glu22–Val23 and Pro43–Gln44 each bind NAD(+). Phosphoserine is present on Ser128. The segment at Gly229 to Leu487 is uroporphyrinogen-III C-methyltransferase. Position 238 (Pro238) interacts with S-adenosyl-L-methionine. The active-site Proton acceptor is Asp261. Lys283 functions as the Proton donor in the catalytic mechanism. S-adenosyl-L-methionine-binding positions include Gly314 to Asp316, Val319, Thr344 to Ala345, Met396, and Ala425.

The protein in the N-terminal section; belongs to the precorrin-2 dehydrogenase / sirohydrochlorin ferrochelatase family. In the C-terminal section; belongs to the precorrin methyltransferase family.

The enzyme catalyses uroporphyrinogen III + 2 S-adenosyl-L-methionine = precorrin-2 + 2 S-adenosyl-L-homocysteine + H(+). It catalyses the reaction precorrin-2 + NAD(+) = sirohydrochlorin + NADH + 2 H(+). It carries out the reaction siroheme + 2 H(+) = sirohydrochlorin + Fe(2+). It functions in the pathway cofactor biosynthesis; adenosylcobalamin biosynthesis; precorrin-2 from uroporphyrinogen III: step 1/1. It participates in cofactor biosynthesis; adenosylcobalamin biosynthesis; sirohydrochlorin from precorrin-2: step 1/1. The protein operates within porphyrin-containing compound metabolism; siroheme biosynthesis; precorrin-2 from uroporphyrinogen III: step 1/1. Its pathway is porphyrin-containing compound metabolism; siroheme biosynthesis; siroheme from sirohydrochlorin: step 1/1. It functions in the pathway porphyrin-containing compound metabolism; siroheme biosynthesis; sirohydrochlorin from precorrin-2: step 1/1. Multifunctional enzyme that catalyzes the SAM-dependent methylations of uroporphyrinogen III at position C-2 and C-7 to form precorrin-2 via precorrin-1. Then it catalyzes the NAD-dependent ring dehydrogenation of precorrin-2 to yield sirohydrochlorin. Finally, it catalyzes the ferrochelation of sirohydrochlorin to yield siroheme. The chain is Siroheme synthase from Psychrobacter sp. (strain PRwf-1).